The chain runs to 356 residues: MTKHIAILRGDGIGPEIVAETVRVLDKLIAQGLDAGYEYAPLGGEAYDEYGHPYPEFTQNLCRKADAVLLGAVGSPQYDNLDRPLRPERGLLAIRKDLNLFANLRPAVLYPELANASTLKPEIVAGLDILIVRELTGDIYFGEPRGIRVLENGEREGYNTMKYSESEIRRIAHVAFQSAQKRSKKVCSVGKANVLETTELWREIFEEIGKEYPDVELSHMYVDNAAMQLVRAPKQFDVIATGNIFGDILSDEASMLTGSIGMLPSASLDENGKGLYEPSHGSAPDIAGQNKANPLATILSLAMLLRYSLNDEARAQQVENAVQKVLQQGLRTSDIYEEGTKLVSCSEMGDAVLAAL.

Residues arginine 95, arginine 105, arginine 133, and aspartate 223 each contribute to the substrate site. Residues aspartate 223, aspartate 247, and aspartate 251 each coordinate Mg(2+). An NAD(+)-binding site is contributed by 281 to 293 (GSAPDIAGQNKAN).

It belongs to the isocitrate and isopropylmalate dehydrogenases family. LeuB type 1 subfamily. As to quaternary structure, homodimer. Mg(2+) serves as cofactor. It depends on Mn(2+) as a cofactor.

The protein resides in the cytoplasm. The catalysed reaction is (2R,3S)-3-isopropylmalate + NAD(+) = 4-methyl-2-oxopentanoate + CO2 + NADH. The protein operates within amino-acid biosynthesis; L-leucine biosynthesis; L-leucine from 3-methyl-2-oxobutanoate: step 3/4. Functionally, catalyzes the oxidation of 3-carboxy-2-hydroxy-4-methylpentanoate (3-isopropylmalate) to 3-carboxy-4-methyl-2-oxopentanoate. The product decarboxylates to 4-methyl-2 oxopentanoate. The protein is 3-isopropylmalate dehydrogenase of Neisseria meningitidis serogroup B (strain ATCC BAA-335 / MC58).